The sequence spans 151 residues: Deoxyuridine 5'-triphosphate nucleotidohydrolase (151 aa).

Substrate is bound by residues 70-72 (RSG), Asn-83, 87-89 (LID), and Met-97.

This sequence belongs to the dUTPase family. The cofactor is Mg(2+).

It carries out the reaction dUTP + H2O = dUMP + diphosphate + H(+). Its pathway is pyrimidine metabolism; dUMP biosynthesis; dUMP from dCTP (dUTP route): step 2/2. This enzyme is involved in nucleotide metabolism: it produces dUMP, the immediate precursor of thymidine nucleotides and it decreases the intracellular concentration of dUTP so that uracil cannot be incorporated into DNA. The sequence is that of Deoxyuridine 5'-triphosphate nucleotidohydrolase from Pseudomonas aeruginosa (strain UCBPP-PA14).